Here is a 353-residue protein sequence, read N- to C-terminus: UPF0283 membrane protein YcjF (353 aa).

3 helical membrane passes run 70 to 90 (MVMGGLALFGASVVGQGVQWT), 100 to 120 (VALGGCAAGALIIGAGVGSVV), and 213 to 233 (ESTLMIAVSPLALVDMAFIAW).

Belongs to the UPF0283 family.

It is found in the cell inner membrane. The polypeptide is UPF0283 membrane protein YcjF (Escherichia coli O45:K1 (strain S88 / ExPEC)).